A 167-amino-acid polypeptide reads, in one-letter code: Peptidyl-prolyl cis-trans isomerase-like 3 (167 aa).

The PPIase cyclophilin-type domain occupies 1-153 (MSVTLHTNLG…QEIKLLNVTV (153 aa)).

Belongs to the cyclophilin-type PPIase family. PPIL3 subfamily.

It carries out the reaction [protein]-peptidylproline (omega=180) = [protein]-peptidylproline (omega=0). Functionally, PPIases accelerate the folding of proteins. It catalyzes the cis-trans isomerization of proline imidic peptide bonds in oligopeptides. This chain is Peptidyl-prolyl cis-trans isomerase-like 3 (CYP10), found in Cryptococcus neoformans var. neoformans serotype D (strain B-3501A) (Filobasidiella neoformans).